Consider the following 268-residue polypeptide: Tryptophan synthase alpha chain (268 aa).

Catalysis depends on proton acceptor residues Glu49 and Asp60.

This sequence belongs to the TrpA family. Tetramer of two alpha and two beta chains.

It catalyses the reaction (1S,2R)-1-C-(indol-3-yl)glycerol 3-phosphate + L-serine = D-glyceraldehyde 3-phosphate + L-tryptophan + H2O. Its pathway is amino-acid biosynthesis; L-tryptophan biosynthesis; L-tryptophan from chorismate: step 5/5. Its function is as follows. The alpha subunit is responsible for the aldol cleavage of indoleglycerol phosphate to indole and glyceraldehyde 3-phosphate. This chain is Tryptophan synthase alpha chain, found in Vibrio vulnificus (strain CMCP6).